A 36-amino-acid chain; its full sequence is Photosystem II reaction center protein M (36 aa).

The chain crosses the membrane as a helical span at residues 7–27 (GFVASLMFVLVPTVFLIVLFI).

It belongs to the PsbM family. PSII is composed of 1 copy each of membrane proteins PsbA, PsbB, PsbC, PsbD, PsbE, PsbF, PsbH, PsbI, PsbJ, PsbK, PsbL, PsbM, PsbT, PsbX, PsbY, PsbZ, Psb30/Ycf12, peripheral proteins PsbO, CyanoQ (PsbQ), PsbU, PsbV and a large number of cofactors. It forms dimeric complexes.

The protein resides in the cellular thylakoid membrane. In terms of biological role, one of the components of the core complex of photosystem II (PSII). PSII is a light-driven water:plastoquinone oxidoreductase that uses light energy to abstract electrons from H(2)O, generating O(2) and a proton gradient subsequently used for ATP formation. It consists of a core antenna complex that captures photons, and an electron transfer chain that converts photonic excitation into a charge separation. This subunit is found at the monomer-monomer interface. The sequence is that of Photosystem II reaction center protein M from Synechococcus sp. (strain CC9311).